The primary structure comprises 156 residues: MPRKGNTPKRDVLPDPLYNNKVVAKLINSIMLDGKKGVAQKICYDAFAIMGEKTGKEPLEVFEEAMNNVMPLLEVKARRIGGATYQVPIEVRADRRQTLGIRWIVDASRKRGEKYMRERLAGELLDAANNTGAAVKKREDTHKMAEANKAFAHYRY.

This sequence belongs to the universal ribosomal protein uS7 family. In terms of assembly, part of the 30S ribosomal subunit. Contacts proteins S9 and S11.

One of the primary rRNA binding proteins, it binds directly to 16S rRNA where it nucleates assembly of the head domain of the 30S subunit. Is located at the subunit interface close to the decoding center, probably blocks exit of the E-site tRNA. The protein is Small ribosomal subunit protein uS7 of Clostridium novyi (strain NT).